A 117-amino-acid chain; its full sequence is Large ribosomal subunit protein uL18 (117 aa).

It belongs to the universal ribosomal protein uL18 family. In terms of assembly, part of the 50S ribosomal subunit; part of the 5S rRNA/L5/L18/L25 subcomplex. Contacts the 5S and 23S rRNAs.

This is one of the proteins that bind and probably mediate the attachment of the 5S RNA into the large ribosomal subunit, where it forms part of the central protuberance. In Vibrio atlanticus (strain LGP32) (Vibrio splendidus (strain Mel32)), this protein is Large ribosomal subunit protein uL18.